We begin with the raw amino-acid sequence, 563 residues long: Dihydroxy-acid dehydratase (563 aa).

Asp-78 is a Mg(2+) binding site. Cys-119 provides a ligand contact to [2Fe-2S] cluster. 2 residues coordinate Mg(2+): Asp-120 and Lys-121. An N6-carboxylysine modification is found at Lys-121. [2Fe-2S] cluster is bound at residue Cys-191. Glu-442 is a Mg(2+) binding site. Residue Ser-468 is the Proton acceptor of the active site.

The protein belongs to the IlvD/Edd family. In terms of assembly, homodimer. Requires [2Fe-2S] cluster as cofactor. Mg(2+) is required as a cofactor.

The catalysed reaction is (2R)-2,3-dihydroxy-3-methylbutanoate = 3-methyl-2-oxobutanoate + H2O. It carries out the reaction (2R,3R)-2,3-dihydroxy-3-methylpentanoate = (S)-3-methyl-2-oxopentanoate + H2O. The protein operates within amino-acid biosynthesis; L-isoleucine biosynthesis; L-isoleucine from 2-oxobutanoate: step 3/4. It functions in the pathway amino-acid biosynthesis; L-valine biosynthesis; L-valine from pyruvate: step 3/4. In terms of biological role, functions in the biosynthesis of branched-chain amino acids. Catalyzes the dehydration of (2R,3R)-2,3-dihydroxy-3-methylpentanoate (2,3-dihydroxy-3-methylvalerate) into 2-oxo-3-methylpentanoate (2-oxo-3-methylvalerate) and of (2R)-2,3-dihydroxy-3-methylbutanoate (2,3-dihydroxyisovalerate) into 2-oxo-3-methylbutanoate (2-oxoisovalerate), the penultimate precursor to L-isoleucine and L-valine, respectively. This is Dihydroxy-acid dehydratase from Desulfitobacterium hafniense (strain DSM 10664 / DCB-2).